A 284-amino-acid polypeptide reads, in one-letter code: Ribose-5-phosphate isomerase (284 aa).

Belongs to the ribose 5-phosphate isomerase family.

It localises to the cytoplasm. The catalysed reaction is aldehydo-D-ribose 5-phosphate = D-ribulose 5-phosphate. The protein operates within carbohydrate degradation; pentose phosphate pathway; D-ribose 5-phosphate from D-ribulose 5-phosphate (non-oxidative stage): step 1/1. In Lodderomyces elongisporus (strain ATCC 11503 / CBS 2605 / JCM 1781 / NBRC 1676 / NRRL YB-4239) (Yeast), this protein is Ribose-5-phosphate isomerase (RKI1).